The sequence spans 485 residues: Metalloprotease AprA (485 aa).

Position 187 (H187) interacts with Zn(2+). E188 is a catalytic residue. H191 and H197 together coordinate Zn(2+). 38 residues coordinate Ca(2+): R268, G270, T272, D300, G302, G303, D305, T342, E344, G349, G351, D353, N358, L360, N362, G366, G367, A368, G369, D371, G375, G376, G377, G378, D380, G384, G385, T386, G387, D389, D398, D405, D415, D461, T463, N465, S467, and D469. Hemolysin-type calcium-binding repeat units lie at residues 347 to 364, 365 to 382, and 383 to 395; these read FGGS…ANVL, KGGA…ADQL, and WGGT…VFGA.

Belongs to the peptidase M10B family. The cofactor is Ca(2+). Zn(2+) serves as cofactor.

Its subcellular location is the secreted. In terms of biological role, secreted protease which is important for P.entomophila to counteract the local immune response of Drosophila. Can degrade antimicrobial peptides (AMPs), e.g. Diptericin and Cecropin A. Thus, protects P.entomophila from the Drosophila antimicrobial peptides produced by the gut innate immune response, and promotes bacterial persistence in the Drosophila gut and killing of the host. Is responsible for maturation of pro-Monalysin to the active toxin Monalysin, by cleaving its N-terminus. In Pseudomonas entomophila (strain L48), this protein is Metalloprotease AprA.